The sequence spans 630 residues: tRNA uridine 5-carboxymethylaminomethyl modification enzyme MnmG (630 aa).

13–18 serves as a coordination point for FAD; the sequence is GGGHAG. 273–287 is an NAD(+) binding site; that stretch reads GPRYCPSIEDKIHRF.

This sequence belongs to the MnmG family. Homodimer. Heterotetramer of two MnmE and two MnmG subunits. FAD is required as a cofactor.

It is found in the cytoplasm. Its function is as follows. NAD-binding protein involved in the addition of a carboxymethylaminomethyl (cmnm) group at the wobble position (U34) of certain tRNAs, forming tRNA-cmnm(5)s(2)U34. The chain is tRNA uridine 5-carboxymethylaminomethyl modification enzyme MnmG from Pseudomonas entomophila (strain L48).